Reading from the N-terminus, the 656-residue chain is Heat shock 70 kDa protein, mitochondrial (656 aa).

Residues 1 to 23 (MFARRLRGAGSLAAASLARWQSS) constitute a mitochondrion transit peptide. Residues 624–656 (EYQQAAAGNSSSSSGNTDSSQGEQQQQGDQQKQ) are disordered. Over residues 626–656 (QQAAAGNSSSSSGNTDSSQGEQQQQGDQQKQ) the composition is skewed to low complexity.

The protein belongs to the heat shock protein 70 family.

It is found in the mitochondrion matrix. The protein resides in the kinetoplast. May participate in eukaryotic mitochondrial DNA replication. This chain is Heat shock 70 kDa protein, mitochondrial (MTP70), found in Trypanosoma cruzi.